The sequence spans 171 residues: Shikimate kinase (171 aa).

Position 14–19 (glycine 14–threonine 19) interacts with ATP. Serine 18 provides a ligand contact to Mg(2+). Residues aspartate 36, arginine 60, and glycine 82 each coordinate substrate. Residue arginine 120 coordinates ATP. A substrate-binding site is contributed by arginine 139. Glutamine 156 contributes to the ATP binding site.

Belongs to the shikimate kinase family. As to quaternary structure, monomer. Requires Mg(2+) as cofactor.

The protein resides in the cytoplasm. It catalyses the reaction shikimate + ATP = 3-phosphoshikimate + ADP + H(+). It functions in the pathway metabolic intermediate biosynthesis; chorismate biosynthesis; chorismate from D-erythrose 4-phosphate and phosphoenolpyruvate: step 5/7. Functionally, catalyzes the specific phosphorylation of the 3-hydroxyl group of shikimic acid using ATP as a cosubstrate. This is Shikimate kinase from Shewanella sediminis (strain HAW-EB3).